Consider the following 463-residue polypeptide: Glycine--tRNA ligase (463 aa).

Residues R98 and E174 each contribute to the substrate site. Residues 206-208, 216-221, 290-291, and 334-337 each bind ATP; these read RNE, FRTREF, EL, and GADR. A substrate-binding site is contributed by 221-225; sequence FEQME. A substrate-binding site is contributed by 330–334; it reads EPSLG.

The protein belongs to the class-II aminoacyl-tRNA synthetase family. In terms of assembly, homodimer.

It localises to the cytoplasm. It catalyses the reaction tRNA(Gly) + glycine + ATP = glycyl-tRNA(Gly) + AMP + diphosphate. Catalyzes the attachment of glycine to tRNA(Gly). This is Glycine--tRNA ligase from Staphylococcus epidermidis (strain ATCC 35984 / DSM 28319 / BCRC 17069 / CCUG 31568 / BM 3577 / RP62A).